A 588-amino-acid chain; its full sequence is Ribonuclease Y (588 aa).

A helical transmembrane segment spans residues 7–27 (VLLVAVLLLTVVVVGAVLVGV). One can recognise a KH domain in the interval 278–359 (VVSVLHLPGD…HRIEEVHDLA (82 aa)). In terms of domain architecture, HD spans 404–497 (VLKHLVESAH…TQASDACSGG (94 aa)).

Belongs to the RNase Y family.

The protein localises to the cell membrane. Functionally, endoribonuclease that initiates mRNA decay. In Salinispora tropica (strain ATCC BAA-916 / DSM 44818 / JCM 13857 / NBRC 105044 / CNB-440), this protein is Ribonuclease Y.